An 824-amino-acid polypeptide reads, in one-letter code: Probable acyl-CoA dehydrogenase IBR3 (824 aa).

Residue G2 is modified to N-acetylglycine. FAD is bound by residues 555 to 565 (FAMTEPQVASS), 589 to 591 (WTS), R706, Q776, and 776 to 780 (QVHGA). Positions 822-824 (SKL) match the Microbody targeting signal motif.

The protein belongs to the acyl-CoA dehydrogenase family. Requires FAD as cofactor.

It localises to the peroxisome. The enzyme catalyses a 2,3-saturated acyl-CoA + A = a 2,3-dehydroacyl-CoA + AH2. Functionally, involved with IBR1 and IBR10 in the peroxisomal beta-oxidation of indole-3-butyric acid (IBA) to form indole-3-acetic acid (IAA), a biologically active auxin. May be responsible for catalyzing the first step in IBA-CoA beta-oxidation. May play a role in defense response to pathogenic bacteria. This is Probable acyl-CoA dehydrogenase IBR3 from Arabidopsis thaliana (Mouse-ear cress).